We begin with the raw amino-acid sequence, 396 residues long: Small ribosomal subunit protein uS9m (396 aa).

K287 bears the N6-acetyllysine mark. Positions 374 to 396 (PRVRERKKPGQEGARRKFTWKKR) are disordered.

The protein belongs to the universal ribosomal protein uS9 family. In terms of assembly, component of the mitochondrial small ribosomal subunit (mt-SSU). Mature mammalian 55S mitochondrial ribosomes consist of a small (28S) and a large (39S) subunit. The 28S small subunit contains a 12S ribosomal RNA (12S mt-rRNA) and 30 different proteins. The 39S large subunit contains a 16S rRNA (16S mt-rRNA), a copy of mitochondrial valine transfer RNA (mt-tRNA(Val)), which plays an integral structural role, and 52 different proteins.

Its subcellular location is the mitochondrion. In Homo sapiens (Human), this protein is Small ribosomal subunit protein uS9m (MRPS9).